The chain runs to 95 residues: Large ribosomal subunit protein uL23 (95 aa).

Belongs to the universal ribosomal protein uL23 family. As to quaternary structure, part of the 50S ribosomal subunit. Contacts protein L29, and trigger factor when it is bound to the ribosome.

Functionally, one of the early assembly proteins it binds 23S rRNA. One of the proteins that surrounds the polypeptide exit tunnel on the outside of the ribosome. Forms the main docking site for trigger factor binding to the ribosome. This is Large ribosomal subunit protein uL23 from Syntrophotalea carbinolica (strain DSM 2380 / NBRC 103641 / GraBd1) (Pelobacter carbinolicus).